Here is a 301-residue protein sequence, read N- to C-terminus: MEFYFLGTGAGMPSKQRNVSAIALLHPKMTWLFDCGEATQHQMLHSPIKPRKVSTIFITHLHGDHIFGLPGFISTRAALEGTTLLTIFGPKGIKEWLEATLRITGTYLRYPLDVIEVEAGQTYEQEGFHIHVEALEHRFLAYGYRIEGQEEKGALHVEALKQLGVPSGPLYRQIKQKETFVFEGTEYQSTDFLGEPKPGIKLAVLGDTVPCEGSLRLAEKVDVLVHEATFADSEQDHAGRFGHSTARQAAEIALKAGVKKLLLTHISARYVDQEQRLEAEAREVFEESYLMTDHQSVVIKG.

Residues His60, His62, Asp64, His65, His137, Asp207, and His265 each coordinate Zn(2+). Asp64 (proton acceptor) is an active-site residue.

This sequence belongs to the RNase Z family. As to quaternary structure, homodimer. Zn(2+) is required as a cofactor.

It catalyses the reaction Endonucleolytic cleavage of RNA, removing extra 3' nucleotides from tRNA precursor, generating 3' termini of tRNAs. A 3'-hydroxy group is left at the tRNA terminus and a 5'-phosphoryl group is left at the trailer molecule.. Functionally, zinc phosphodiesterase, which displays some tRNA 3'-processing endonuclease activity. Probably involved in tRNA maturation, by removing a 3'-trailer from precursor tRNA. This is Ribonuclease Z from Exiguobacterium sibiricum (strain DSM 17290 / CCUG 55495 / CIP 109462 / JCM 13490 / 255-15).